Reading from the N-terminus, the 174-residue chain is Interleukin-10 (174 aa).

The signal sequence occupies residues 1–16 (MPTWMLLFCLLCVTSS). Asn17 carries N-linked (GlcNAc...) asparagine glycosylation. 2 disulfide bridges follow: Cys26–Cys122 and Cys76–Cys128.

The protein belongs to the IL-10 family. In terms of assembly, homodimer. Interacts with IL10RA and IL10RB.

The protein resides in the secreted. Functionally, major immune regulatory cytokine that acts on many cells of the immune system where it has profound anti-inflammatory functions, limiting excessive tissue disruption caused by inflammation. Mechanistically, IL10 binds to its heterotetrameric receptor comprising IL10RA and IL10RB leading to JAK1 and STAT2-mediated phosphorylation of STAT3. In turn, STAT3 translocates to the nucleus where it drives expression of anti-inflammatory mediators. Targets antigen-presenting cells (APCs) such as macrophages and monocytes and inhibits their release of pro-inflammatory cytokines including granulocyte-macrophage colony-stimulating factor /GM-CSF, granulocyte colony-stimulating factor/G-CSF, IL-1 alpha, IL-1 beta, IL-6, IL-8 and TNF-alpha. Also interferes with antigen presentation by reducing the expression of MHC-class II and co-stimulatory molecules, thereby inhibiting their ability to induce T cell activation. In addition, controls the inflammatory response of macrophages by reprogramming essential metabolic pathways including mTOR signaling. The sequence is that of Interleukin-10 (IL10) from Trichosurus vulpecula (Brush-tailed possum).